A 179-amino-acid chain; its full sequence is Large ribosomal subunit protein uL5 (179 aa).

This sequence belongs to the universal ribosomal protein uL5 family. As to quaternary structure, part of the 50S ribosomal subunit; part of the 5S rRNA/L5/L18/L25 subcomplex. Contacts the 5S rRNA and the P site tRNA. Forms a bridge to the 30S subunit in the 70S ribosome.

In terms of biological role, this is one of the proteins that bind and probably mediate the attachment of the 5S RNA into the large ribosomal subunit, where it forms part of the central protuberance. In the 70S ribosome it contacts protein S13 of the 30S subunit (bridge B1b), connecting the 2 subunits; this bridge is implicated in subunit movement. Contacts the P site tRNA; the 5S rRNA and some of its associated proteins might help stabilize positioning of ribosome-bound tRNAs. The sequence is that of Large ribosomal subunit protein uL5 from Aliivibrio salmonicida (strain LFI1238) (Vibrio salmonicida (strain LFI1238)).